The primary structure comprises 337 residues: Inositol 2-dehydrogenase (337 aa).

Belongs to the Gfo/Idh/MocA family. As to quaternary structure, homotetramer.

It carries out the reaction myo-inositol + NAD(+) = scyllo-inosose + NADH + H(+). Involved in the oxidation of myo-inositol (MI) to 2-keto-myo-inositol (2KMI or 2-inosose). This chain is Inositol 2-dehydrogenase, found in Klebsiella pneumoniae subsp. pneumoniae (strain ATCC 700721 / MGH 78578).